The following is a 521-amino-acid chain: ATP synthase subunit beta (521 aa).

Low complexity-rich tracts occupy residues 1 to 21 (MAKAATPKTTAAAEAKPAAKA) and 28 to 42 (PKTTAAAKPAATKSG). Positions 1–42 (MAKAATPKTTAAAEAKPAAKAPAKKAAPKTTAAAKPAATKSG) are disordered. 199 to 206 (GGAGVGKT) contacts ATP.

Belongs to the ATPase alpha/beta chains family. In terms of assembly, F-type ATPases have 2 components, CF(1) - the catalytic core - and CF(0) - the membrane proton channel. CF(1) has five subunits: alpha(3), beta(3), gamma(1), delta(1), epsilon(1). CF(0) has three main subunits: a(1), b(2) and c(9-12). The alpha and beta chains form an alternating ring which encloses part of the gamma chain. CF(1) is attached to CF(0) by a central stalk formed by the gamma and epsilon chains, while a peripheral stalk is formed by the delta and b chains.

It is found in the cell inner membrane. The enzyme catalyses ATP + H2O + 4 H(+)(in) = ADP + phosphate + 5 H(+)(out). Functionally, produces ATP from ADP in the presence of a proton gradient across the membrane. The catalytic sites are hosted primarily by the beta subunits. In Brucella canis (strain ATCC 23365 / NCTC 10854 / RM-666), this protein is ATP synthase subunit beta.